Reading from the N-terminus, the 107-residue chain is UPF0145 protein LVIS_1527 (107 aa).

The protein belongs to the UPF0145 family.

This chain is UPF0145 protein LVIS_1527, found in Levilactobacillus brevis (strain ATCC 367 / BCRC 12310 / CIP 105137 / JCM 1170 / LMG 11437 / NCIMB 947 / NCTC 947) (Lactobacillus brevis).